The primary structure comprises 346 residues: MSGEDDFYLFQNISSVGPWDGPQYHLAPVWAFRLQAAFMGFVFFVGTPLNAIVLVATLHYKKLRQPLNYILVNVSLGGFLFCIFSVFTVFIASCHGYFLFGRHVCALEAFLGSVAGLVTGWSLAFLAFERYVVICKPFGSIRFNSKHALMVVLATWIIGIGVSIPPFFGWSRFIPEGLQCSCGPDWYTVGTKYRSEYYTWFLFIFCFIIPLSLICFSYSQLLRTLRAVAAQQQESATTQKAEREVSHMVVVMVGSFCLCYVPYAALAMYMVNNRNHGLDLRLVTIPAFFSKSSCVYNPIIYCFMNKQFRACILEMVCRKPMADESDVSGSQKTEVSTVSSSKVGPH.

Over 1–31 the chain is Extracellular; sequence MSGEDDFYLFQNISSVGPWDGPQYHLAPVWA. An N-linked (GlcNAc...) asparagine glycan is attached at Asn-12. Residues 32 to 56 form a helical membrane-spanning segment; that stretch reads FRLQAAFMGFVFFVGTPLNAIVLVA. The Cytoplasmic portion of the chain corresponds to 57-68; that stretch reads TLHYKKLRQPLN. The chain crosses the membrane as a helical span at residues 69 to 94; sequence YILVNVSLGGFLFCIFSVFTVFIASC. Over 95–108 the chain is Extracellular; that stretch reads HGYFLFGRHVCALE. Cysteines 105 and 182 form a disulfide. The chain crosses the membrane as a helical span at residues 109–128; sequence AFLGSVAGLVTGWSLAFLAF. Topologically, residues 129 to 147 are cytoplasmic; it reads ERYVVICKPFGSIRFNSKH. Residues 148 to 171 form a helical membrane-spanning segment; the sequence is ALMVVLATWIIGIGVSIPPFFGWS. At 172–197 the chain is on the extracellular side; the sequence is RFIPEGLQCSCGPDWYTVGTKYRSEY. Residues 198–225 traverse the membrane as a helical segment; the sequence is YTWFLFIFCFIIPLSLICFSYSQLLRTL. Residues 226 to 247 lie on the Cytoplasmic side of the membrane; that stretch reads RAVAAQQQESATTQKAEREVSH. A helical membrane pass occupies residues 248-271; sequence MVVVMVGSFCLCYVPYAALAMYMV. Residues 272–279 lie on the Extracellular side of the membrane; the sequence is NNRNHGLD. Residues 280 to 304 form a helical membrane-spanning segment; it reads LRLVTIPAFFSKSSCVYNPIIYCFM. The residue at position 291 (Lys-291) is an N6-(retinylidene)lysine. The Cytoplasmic segment spans residues 305–346; sequence NKQFRACILEMVCRKPMADESDVSGSQKTEVSTVSSSKVGPH. A disordered region spans residues 324-346; that stretch reads ESDVSGSQKTEVSTVSSSKVGPH. The span at 330–346 shows a compositional bias: low complexity; it reads SQKTEVSTVSSSKVGPH.

Belongs to the G-protein coupled receptor 1 family. Opsin subfamily. Phosphorylated on some or all of the serine and threonine residues present in the C-terminal region. Expressed in the inner and outer segments of cone photoreceptor cells in the retina (at protein level).

The protein localises to the cell membrane. The protein resides in the photoreceptor inner segment. It is found in the cell projection. It localises to the cilium. Its subcellular location is the photoreceptor outer segment. The protein localises to the cytoplasm. The protein resides in the perinuclear region. Visual pigments are the light-absorbing molecules that mediate vision. They consist of an apoprotein, opsin, covalently linked to cis-retinal. Required for the maintenance of cone outer segment organization in the ventral retina, but not essential for the maintenance of functioning cone photoreceptors. Involved in ensuring correct abundance and localization of retinal membrane proteins. May increase spectral sensitivity in dim light. The sequence is that of Short-wave-sensitive opsin 1 (Opn1sw) from Mus musculus (Mouse).